The chain runs to 927 residues: Protein LONGIFOLIA 1 (927 aa).

Disordered stretches follow at residues 41–198, 210–257, 460–588, and 605–626; these read TGDE…EGRR, YDER…GHRR, AQKV…SDSN, and YERNSDITEQHTPKQRSPDLGM. Residues 86 to 114 are compositionally biased toward low complexity; that stretch reads SSESSSRLSFSSSPCSSSFSSADISTTAS. Polar residues predominate over residues 115-125; sequence QFEQPGLSNGE. Basic and acidic residues predominate over residues 146-165; it reads DIRELVRSSIHKETRTRDEE. Over residues 182-193 the composition is skewed to polar residues; the sequence is KESSPSRNSNEW. Basic and acidic residues predominate over residues 210 to 226; it reads YDERETRKTGAKLKETP. Residues 232–245 show a composition bias toward low complexity; sequence SRSNSFRSARSSCS. Composition is skewed to polar residues over residues 483–500 and 538–553; these read QTESTMKNTSTRPLQSKS and NKNQRQQLSRQQTESA. Basic and acidic residues-rich tracts occupy residues 569-584 and 605-616; these read SEDRLSDESSDLRSLR and YERNSDITEQHT.

In terms of assembly, interacts (via C-terminus) with TON1A and TON1B. As to expression, expressed in roots, petioles, leaf blades and floral organs.

The protein resides in the nucleus. In terms of biological role, in association with LNG2, regulates leaf morphology by promoting longitudinal polar cell elongation independently of ROT3. This Arabidopsis thaliana (Mouse-ear cress) protein is Protein LONGIFOLIA 1 (LNG1).